Here is a 380-residue protein sequence, read N- to C-terminus: GDP-mannose:cellobiosyl-diphosphopolyprenol alpha-mannosyltransferase (380 aa).

Belongs to the glycosyltransferase group 1 family. Glycosyltransferase 4 subfamily.

The enzyme catalyses beta-D-Glc-(1-&gt;4)-alpha-D-Glc-di-trans,octa-cis-undecaprenyl diphosphate + GDP-alpha-D-mannose = alpha-D-Man-(1-&gt;3)-beta-D-Glc-(1-&gt;4)-alpha-D-Glc-1-di-trans,octa-cis-undecaprenyl diphosphate + GDP + H(+). In terms of biological role, involved in the biosynthesis of the exopolysaccharide xanthan, a polymer that is comprised of repeating pentasaccharide units with the structure of a beta-(1,4)-linked D-glucose backbone with trisaccharide side chains composed of mannose-beta-(1,4)-glucuronic acid-beta-(1,2)-mannose attached to alternate glucose residues in the backbone by alpha-(1,3) linkages. Xanthan is involved in pathogenicity but has also been used in a variety of applications as a specialty polymer for commercial applications, including food additives, where they act as viscosifying, stabilizing, emulsifying, or gelling agents. The polypeptide is GDP-mannose:cellobiosyl-diphosphopolyprenol alpha-mannosyltransferase (gumH) (Xanthomonas campestris).